Here is a 202-residue protein sequence, read N- to C-terminus: Recombination protein RecR (202 aa).

Residues 56 to 71 form a C4-type zinc finger; sequence CRVCGNLDSADPCSVC. The Toprim domain maps to 79-179; that stretch reads GLICVVESVG…SVTRLAQGIP (101 aa).

Belongs to the RecR family.

Its function is as follows. May play a role in DNA repair. It seems to be involved in an RecBC-independent recombinational process of DNA repair. It may act with RecF and RecO. The polypeptide is Recombination protein RecR (Granulibacter bethesdensis (strain ATCC BAA-1260 / CGDNIH1)).